The sequence spans 323 residues: Octaprenyl diphosphate synthase (323 aa).

Isopentenyl diphosphate-binding residues include lysine 45, arginine 48, and histidine 77. Mg(2+) contacts are provided by aspartate 84 and aspartate 88. Arginine 93 serves as a coordination point for an all-trans-polyprenyl diphosphate. Arginine 94 is a binding site for isopentenyl diphosphate. Lysine 170, threonine 171, and glutamine 208 together coordinate an all-trans-polyprenyl diphosphate.

The protein belongs to the FPP/GGPP synthase family. The cofactor is Mg(2+).

It catalyses the reaction 5 isopentenyl diphosphate + (2E,6E)-farnesyl diphosphate = all-trans-octaprenyl diphosphate + 5 diphosphate. In terms of biological role, supplies octaprenyl diphosphate, the precursor for the side chain of the isoprenoid quinones ubiquinone and menaquinone. This Escherichia coli (strain K12) protein is Octaprenyl diphosphate synthase (ispB).